The primary structure comprises 666 residues: Long chain acyl-CoA synthetase 5 (666 aa).

Position 228 to 239 (228 to 239 (IMYTSGTTGDPK)) interacts with ATP. The tract at residues 495–519 (DGWLHTGDVGEWQPNGSMKIIDRKK) is fatty acid-binding.

Belongs to the ATP-dependent AMP-binding enzyme family. Mg(2+) serves as cofactor.

It catalyses the reaction a long-chain fatty acid + ATP + CoA = a long-chain fatty acyl-CoA + AMP + diphosphate. The protein operates within lipid metabolism; fatty acid metabolism. Activation of long-chain fatty acids for both synthesis of cellular lipids, and degradation via beta-oxidation. Preferentially uses palmitate, palmitoleate, oleate and linoleate. The sequence is that of Long chain acyl-CoA synthetase 5 (LACS5) from Arabidopsis thaliana (Mouse-ear cress).